Here is a 191-residue protein sequence, read N- to C-terminus: Large ribosomal subunit protein uL5 (191 aa).

Belongs to the universal ribosomal protein uL5 family. As to quaternary structure, part of the 50S ribosomal subunit; part of the 5S rRNA/L5/L18/L25 subcomplex. Contacts the 5S rRNA and the P site tRNA. Forms a bridge to the 30S subunit in the 70S ribosome.

In terms of biological role, this is one of the proteins that bind and probably mediate the attachment of the 5S RNA into the large ribosomal subunit, where it forms part of the central protuberance. In the 70S ribosome it contacts protein S13 of the 30S subunit (bridge B1b), connecting the 2 subunits; this bridge is implicated in subunit movement. Contacts the P site tRNA; the 5S rRNA and some of its associated proteins might help stabilize positioning of ribosome-bound tRNAs. This is Large ribosomal subunit protein uL5 from Micrococcus luteus (strain ATCC 4698 / DSM 20030 / JCM 1464 / CCM 169 / CCUG 5858 / IAM 1056 / NBRC 3333 / NCIMB 9278 / NCTC 2665 / VKM Ac-2230) (Micrococcus lysodeikticus).